The chain runs to 261 residues: MSDILDRIIAVKREEVAAAMRSTPLEALKLEASARDRRDFVGALRAKHAAGQPAVIAEIKKASPSKGVLREHFVPADIARSYAAHGAACLSVLTDEQFFQGSVRYLEEARAACDLPVLRKDFIVDAYQILEARAMGADAILLIAAALDTPLMQELEAYAHSLDLAVLVEVHDRNEMEQALTLKTPLLGINNRNLRTFETSIRATLDMLDMIPQDRIVVTESGILSRADVDTMRAANVNTFLVGEAFMRADQPGEELARMFF.

The protein belongs to the TrpC family.

The enzyme catalyses 1-(2-carboxyphenylamino)-1-deoxy-D-ribulose 5-phosphate + H(+) = (1S,2R)-1-C-(indol-3-yl)glycerol 3-phosphate + CO2 + H2O. It participates in amino-acid biosynthesis; L-tryptophan biosynthesis; L-tryptophan from chorismate: step 4/5. In Burkholderia multivorans (strain ATCC 17616 / 249), this protein is Indole-3-glycerol phosphate synthase.